Consider the following 454-residue polypeptide: Probable 1,4-beta-D-glucan cellobiohydrolase C (454 aa).

The first 19 residues, 1–19, serve as a signal peptide directing secretion; it reads MKHLASSIALTLLLPAVQA. The CBM1 domain occupies 20-55; it reads QQTVWGQCGGQGWSGPTSCVAGAACSTLNPYYAQCI. Intrachain disulfides connect C27-C44 and C38-C54. 2 thr-rich linker regions span residues 59-94 and 95-454; these read TATS…PTVT and ASGN…NPSF. The segment at 68-95 is disordered; that stretch reads TTAATTTSQTTTKPTTTGPTTSAPTVTA. D184 is a catalytic residue. Cystine bridges form between C185/C244 and C376/C423. Catalysis depends on D230, which acts as the Proton donor. The active-site Nucleophile is D409. A glycan (N-linked (GlcNAc...) asparagine) is linked at N413.

The protein belongs to the glycosyl hydrolase 6 (cellulase B) family.

The protein resides in the secreted. It catalyses the reaction Hydrolysis of (1-&gt;4)-beta-D-glucosidic linkages in cellulose and cellotetraose, releasing cellobiose from the non-reducing ends of the chains.. Its function is as follows. The biological conversion of cellulose to glucose generally requires three types of hydrolytic enzymes: (1) Endoglucanases which cut internal beta-1,4-glucosidic bonds; (2) Exocellobiohydrolases that cut the disaccharide cellobiose from the non-reducing end of the cellulose polymer chain; (3) Beta-1,4-glucosidases which hydrolyze the cellobiose and other short cello-oligosaccharides to glucose. The protein is Probable 1,4-beta-D-glucan cellobiohydrolase C (cbhC) of Aspergillus fumigatus (strain CBS 144.89 / FGSC A1163 / CEA10) (Neosartorya fumigata).